The primary structure comprises 152 residues: Large ribosomal subunit protein bL9 (152 aa).

It belongs to the bacterial ribosomal protein bL9 family.

Its function is as follows. Binds to the 23S rRNA. This is Large ribosomal subunit protein bL9 from Nostoc punctiforme (strain ATCC 29133 / PCC 73102).